A 290-amino-acid chain; its full sequence is 6-carboxyhexanoate--CoA ligase (290 aa).

The protein belongs to the BioW family. Homodimer. It depends on Mg(2+) as a cofactor.

The enzyme catalyses heptanedioate + ATP + CoA = 6-carboxyhexanoyl-CoA + AMP + diphosphate. It functions in the pathway metabolic intermediate metabolism; pimeloyl-CoA biosynthesis; pimeloyl-CoA from pimelate: step 1/1. Its function is as follows. Catalyzes the transformation of pimelate into pimeloyl-CoA with concomitant hydrolysis of ATP to AMP. This is 6-carboxyhexanoate--CoA ligase from Bacillus amyloliquefaciens (Bacillus velezensis).